Consider the following 559-residue polypeptide: Berberine bridge enzyme-like A (559 aa).

The signal sequence occupies residues 1 to 21 (MFPLIILISFSLASLSETATG). Asparagine 25 and asparagine 37 each carry an N-linked (GlcNAc...) asparagine glycan. Cysteine 29 and cysteine 86 are disulfide-bonded. The FAD-binding PCMH-type domain occupies 64–240 (FMPKPTFIIL…YAWKIRLLKV (177 aa)). Histidine 101 is modified (pros-8alpha-FAD histidine). Residues asparagine 321, asparagine 355, and asparagine 494 are each glycosylated (N-linked (GlcNAc...) asparagine).

It belongs to the oxygen-dependent FAD-linked oxidoreductase family. The cofactor is FAD. As to expression, mostly expressed in roots.

It is found in the vacuole. It functions in the pathway alkaloid biosynthesis; nicotine biosynthesis. In terms of biological role, involved in the biosynthesis of pyridine alkaloid natural products, leading mainly to the production of anabasine, anatabine, nicotine and nornicotine, effective deterrents against herbivores with antiparasitic and pesticide properties (neurotoxins); nornicotine serves as the precursor in the synthesis of the carcinogen compound N'-nitrosonornicotine (NNN). Catalyzes a late oxidation step subsequent to the pyridine ring condensation reaction in the biosynthesis of alkaloids. This is Berberine bridge enzyme-like A from Nicotiana tabacum (Common tobacco).